The primary structure comprises 930 residues: uncharacterized protein (930 aa).

The short motif at 434 to 441 is the Nuclear localization signal element; that stretch reads IRRGISRK.

It is found in the nucleus. This is an uncharacterized protein from Chaetomium thermophilum (strain DSM 1495 / CBS 144.50 / IMI 039719) (Thermochaetoides thermophila).